The following is a 400-amino-acid chain: MYIKTLTVSDINRYIKKTLDNDFILGNCSVKGEVSNFKFHSSGHMYFSLKDKFSKINCIMFKSSVEKLNFMPGDGMKVIVKGRISLYEKEGVYQLYCSEMKPDGMGELYLAFEKLKIELEKKGLFDISHKKKIPLYAKKIGVITSPTGAAVKDIINVTRRRNKKIELLIYPSLVQGTGASDNIIKGIETFNSMEDVELIIIARGGGSIEELWCFNDEKLAEAVYSSKKPIITGVGHEIDYTIVDFVSDMRAPTPSAAAEIGVFSLEEYVQKILNYKNKLYNSVKNTVNDKKNRLAFVKKTLEVNNPLTYIANEYENIDKIKESLNFKIKVIINGKKEKLGKINALLSAHNPLNILNKGYCIIEDEQKNVISSIEELNKKYKVDIIMKDGTSKVELIHYKK.

This sequence belongs to the XseA family. Heterooligomer composed of large and small subunits.

Its subcellular location is the cytoplasm. It catalyses the reaction Exonucleolytic cleavage in either 5'- to 3'- or 3'- to 5'-direction to yield nucleoside 5'-phosphates.. Bidirectionally degrades single-stranded DNA into large acid-insoluble oligonucleotides, which are then degraded further into small acid-soluble oligonucleotides. The protein is Exodeoxyribonuclease 7 large subunit of Clostridium kluyveri (strain NBRC 12016).